The chain runs to 132 residues: S-adenosylmethionine decarboxylase proenzyme (132 aa).

Ser65 acts as the Schiff-base intermediate with substrate; via pyruvic acid in catalysis. Ser65 is modified (pyruvic acid (Ser); by autocatalysis). His70 (proton acceptor; for processing activity) is an active-site residue. The active-site Proton donor; for catalytic activity is Cys85.

This sequence belongs to the prokaryotic AdoMetDC family. Type 1 subfamily. In terms of assembly, heterotetramer of two alpha and two beta chains arranged as a dimer of alpha/beta heterodimers. Pyruvate serves as cofactor. In terms of processing, is synthesized initially as an inactive proenzyme. Formation of the active enzyme involves a self-maturation process in which the active site pyruvoyl group is generated from an internal serine residue via an autocatalytic post-translational modification. Two non-identical subunits are generated from the proenzyme in this reaction, and the pyruvate is formed at the N-terminus of the alpha chain, which is derived from the carboxyl end of the proenzyme. The post-translation cleavage follows an unusual pathway, termed non-hydrolytic serinolysis, in which the side chain hydroxyl group of the serine supplies its oxygen atom to form the C-terminus of the beta chain, while the remainder of the serine residue undergoes an oxidative deamination to produce ammonia and the pyruvoyl group blocking the N-terminus of the alpha chain.

It catalyses the reaction S-adenosyl-L-methionine + H(+) = S-adenosyl 3-(methylsulfanyl)propylamine + CO2. The protein operates within amine and polyamine biosynthesis; S-adenosylmethioninamine biosynthesis; S-adenosylmethioninamine from S-adenosyl-L-methionine: step 1/1. Functionally, catalyzes the decarboxylation of S-adenosylmethionine to S-adenosylmethioninamine (dcAdoMet), the propylamine donor required for the synthesis of the polyamines spermine and spermidine from the diamine putrescine. The protein is S-adenosylmethionine decarboxylase proenzyme of Symbiobacterium thermophilum (strain DSM 24528 / JCM 14929 / IAM 14863 / T).